The primary structure comprises 736 residues: Elongation factor 2 (736 aa).

The 244-residue stretch at 18 to 261 (EQIRNIGITA…MVVKHIPNPR (244 aa)) folds into the tr-type G domain. GTP is bound by residues 27-34 (AHVDHGKT), 93-97 (DTPGH), and 147-150 (NKID). Residue H602 is modified to Diphthamide.

This sequence belongs to the TRAFAC class translation factor GTPase superfamily. Classic translation factor GTPase family. EF-G/EF-2 subfamily.

The protein resides in the cytoplasm. Catalyzes the GTP-dependent ribosomal translocation step during translation elongation. During this step, the ribosome changes from the pre-translocational (PRE) to the post-translocational (POST) state as the newly formed A-site-bound peptidyl-tRNA and P-site-bound deacylated tRNA move to the P and E sites, respectively. Catalyzes the coordinated movement of the two tRNA molecules, the mRNA and conformational changes in the ribosome. The polypeptide is Elongation factor 2 (Desulfurococcus amylolyticus (strain DSM 18924 / JCM 16383 / VKM B-2413 / 1221n) (Desulfurococcus kamchatkensis)).